The chain runs to 363 residues: Glycerol-3-phosphate dehydrogenase [NAD(+)], cytoplasmic (363 aa).

NAD(+)-binding positions include 11 to 16 (GSGNWG), phenylalanine 98, lysine 121, and alanine 155. Lysine 121 serves as a coordination point for substrate. Lysine 206 acts as the Proton acceptor in catalysis. Positions 270 and 299 each coordinate NAD(+). 270–271 (RN) is a substrate binding site.

It belongs to the NAD-dependent glycerol-3-phosphate dehydrogenase family. In terms of assembly, homodimer. As to expression, isoform GPDH-1 is predominant in thorax and isoform GPDH-3 in abdomen.

It is found in the cytoplasm. The catalysed reaction is sn-glycerol 3-phosphate + NAD(+) = dihydroxyacetone phosphate + NADH + H(+). It functions in the pathway phospholipid metabolism; alpha-glycerophosphate cycle. This chain is Glycerol-3-phosphate dehydrogenase [NAD(+)], cytoplasmic, found in Drosophila melanogaster (Fruit fly).